The following is a 129-amino-acid chain: Small ribosomal subunit protein uS11 (129 aa).

This sequence belongs to the universal ribosomal protein uS11 family. As to quaternary structure, part of the 30S ribosomal subunit. Interacts with proteins S7 and S18. Binds to IF-3.

Located on the platform of the 30S subunit, it bridges several disparate RNA helices of the 16S rRNA. Forms part of the Shine-Dalgarno cleft in the 70S ribosome. The sequence is that of Small ribosomal subunit protein uS11 from Haemophilus influenzae (strain ATCC 51907 / DSM 11121 / KW20 / Rd).